The sequence spans 445 residues: Probable glycine dehydrogenase (decarboxylating) subunit 1 (445 aa).

The protein belongs to the GcvP family. N-terminal subunit subfamily. As to quaternary structure, the glycine cleavage system is composed of four proteins: P, T, L and H. In this organism, the P 'protein' is a heterodimer of two subunits.

The catalysed reaction is N(6)-[(R)-lipoyl]-L-lysyl-[glycine-cleavage complex H protein] + glycine + H(+) = N(6)-[(R)-S(8)-aminomethyldihydrolipoyl]-L-lysyl-[glycine-cleavage complex H protein] + CO2. In terms of biological role, the glycine cleavage system catalyzes the degradation of glycine. The P protein binds the alpha-amino group of glycine through its pyridoxal phosphate cofactor; CO(2) is released and the remaining methylamine moiety is then transferred to the lipoamide cofactor of the H protein. The protein is Probable glycine dehydrogenase (decarboxylating) subunit 1 of Anaeromyxobacter dehalogenans (strain 2CP-1 / ATCC BAA-258).